The following is a 311-amino-acid chain: Malate dehydrogenase (311 aa).

Residues 7–13 (GAAGGIG) and D34 each bind NAD(+). Substrate-binding residues include R81 and R87. NAD(+)-binding positions include N94 and 117 to 119 (ITN). Residues N119 and R153 each coordinate substrate. Catalysis depends on H177, which acts as the Proton acceptor. M227 contacts NAD(+).

Belongs to the LDH/MDH superfamily. MDH type 1 family. Homodimer.

It catalyses the reaction (S)-malate + NAD(+) = oxaloacetate + NADH + H(+). In terms of biological role, catalyzes the reversible oxidation of malate to oxaloacetate. This chain is Malate dehydrogenase, found in Shewanella sediminis (strain HAW-EB3).